A 175-amino-acid polypeptide reads, in one-letter code: MQTFILAGGCFWCLDAVYRTLDGVQDVISGYIGGHTAHPSYDAVCTGATGHAEAVKVVFDEEVIPADVILDVFFTLHDPRQLNRQGADVGTQYRSAMFPADAEQEQLFRDAIARAGDLLDGTPVTTIEPLGTWHDAEDYHQDFFAKNPGQGYCNAVAVPKVNKVRKSFAQYVRAA.

The active site involves C10.

It belongs to the MsrA Met sulfoxide reductase family.

The catalysed reaction is L-methionyl-[protein] + [thioredoxin]-disulfide + H2O = L-methionyl-(S)-S-oxide-[protein] + [thioredoxin]-dithiol. It catalyses the reaction [thioredoxin]-disulfide + L-methionine + H2O = L-methionine (S)-S-oxide + [thioredoxin]-dithiol. Functionally, has an important function as a repair enzyme for proteins that have been inactivated by oxidation. Catalyzes the reversible oxidation-reduction of methionine sulfoxide in proteins to methionine. This Clavibacter sepedonicus (Clavibacter michiganensis subsp. sepedonicus) protein is Peptide methionine sulfoxide reductase MsrA.